Reading from the N-terminus, the 24-residue chain is Coenzyme PQQ synthesis protein A (24 aa).

Positions 16–20 (EITMY) form a cross-link, pyrroloquinoline quinone (Glu-Tyr).

Belongs to the PqqA family.

It participates in cofactor biosynthesis; pyrroloquinoline quinone biosynthesis. Functionally, required for coenzyme pyrroloquinoline quinone (PQQ) biosynthesis. PQQ is probably formed by cross-linking a specific glutamate to a specific tyrosine residue and excising these residues from the peptide. This Cupriavidus taiwanensis (strain DSM 17343 / BCRC 17206 / CCUG 44338 / CIP 107171 / LMG 19424 / R1) (Ralstonia taiwanensis (strain LMG 19424)) protein is Coenzyme PQQ synthesis protein A.